The sequence spans 87 residues: Toxin Cll5b (87 aa).

The signal sequence occupies residues 1 to 19; that stretch reads MNSLLMITACLAEIGTVWA. The region spanning 20–85 is the LCN-type CS-alpha/beta domain; the sequence is KEGYLVNKST…TYPLPNKSCS (66 aa). Cystine bridges form between Cys-31–Cys-84, Cys-35–Cys-60, Cys-44–Cys-65, and Cys-48–Cys-67. The propeptide at 86 to 87 is removed by a carboxypeptidase; that stretch reads KK.

It belongs to the long (4 C-C) scorpion toxin superfamily. Sodium channel inhibitor family. Beta subfamily. In terms of tissue distribution, expressed by the venom gland.

The protein resides in the secreted. Beta toxins bind voltage-independently at site-4 of sodium channels (Nav) and shift the voltage of activation toward more negative potentials thereby affecting sodium channel activation and promoting spontaneous and repetitive firing. This Centruroides limpidus (Mexican scorpion) protein is Toxin Cll5b.